Here is a 149-residue protein sequence, read N- to C-terminus: D-aminoacyl-tRNA deacylase (149 aa).

The Gly-cisPro motif, important for rejection of L-amino acids motif lies at 137–138 (GP).

Belongs to the DTD family. Homodimer.

The protein resides in the cytoplasm. It carries out the reaction glycyl-tRNA(Ala) + H2O = tRNA(Ala) + glycine + H(+). The enzyme catalyses a D-aminoacyl-tRNA + H2O = a tRNA + a D-alpha-amino acid + H(+). An aminoacyl-tRNA editing enzyme that deacylates mischarged D-aminoacyl-tRNAs. Also deacylates mischarged glycyl-tRNA(Ala), protecting cells against glycine mischarging by AlaRS. Acts via tRNA-based rather than protein-based catalysis; rejects L-amino acids rather than detecting D-amino acids in the active site. By recycling D-aminoacyl-tRNA to D-amino acids and free tRNA molecules, this enzyme counteracts the toxicity associated with the formation of D-aminoacyl-tRNA entities in vivo and helps enforce protein L-homochirality. The sequence is that of D-aminoacyl-tRNA deacylase from Clostridium botulinum (strain 657 / Type Ba4).